Reading from the N-terminus, the 261-residue chain is tRNA 5-carboxymethoxyuridine methyltransferase (261 aa).

S-adenosyl-L-methionine is bound by residues arginine 26, 52–53 (GG), aspartate 73, 102–103 (AQ), and histidine 119.

Belongs to the class I-like SAM-binding methyltransferase superfamily. CmoM family. In terms of assembly, homodimer.

The enzyme catalyses 5-carboxymethoxyuridine(34) in tRNA + S-adenosyl-L-methionine = 5-methoxycarbonylmethoxyuridine(34) in tRNA + S-adenosyl-L-homocysteine. Catalyzes the methylation of 5-carboxymethoxyuridine (cmo5U) to form 5-methoxycarbonylmethoxyuridine (mcmo5U) at position 34 in tRNAs. The protein is tRNA 5-carboxymethoxyuridine methyltransferase of Escherichia coli O157:H7.